The following is a 764-amino-acid chain: 5-methyltetrahydropteroyltriglutamate--homocysteine methyltransferase (764 aa).

5-methyltetrahydropteroyltri-L-glutamate is bound by residues 16 to 19 (RELK) and Lys-117. L-homocysteine-binding positions include 442–444 (IGS) and Glu-495. L-methionine contacts are provided by residues 442 to 444 (IGS) and Glu-495. 5-methyltetrahydropteroyltri-L-glutamate-binding positions include 526–527 (RC) and Trp-572. Position 610 (Asp-610) interacts with L-homocysteine. Residue Asp-610 coordinates L-methionine. Glu-616 serves as a coordination point for 5-methyltetrahydropteroyltri-L-glutamate. Zn(2+) is bound by residues His-652, Cys-654, and Glu-676. His-705 serves as the catalytic Proton donor. Zn(2+) is bound at residue Cys-737.

Belongs to the vitamin-B12 independent methionine synthase family. Zn(2+) serves as cofactor.

The catalysed reaction is 5-methyltetrahydropteroyltri-L-glutamate + L-homocysteine = tetrahydropteroyltri-L-glutamate + L-methionine. The protein operates within amino-acid biosynthesis; L-methionine biosynthesis via de novo pathway; L-methionine from L-homocysteine (MetE route): step 1/1. In terms of biological role, catalyzes the transfer of a methyl group from 5-methyltetrahydrofolate to homocysteine resulting in methionine formation. The protein is 5-methyltetrahydropteroyltriglutamate--homocysteine methyltransferase of Bordetella pertussis (strain Tohama I / ATCC BAA-589 / NCTC 13251).